The sequence spans 342 residues: Cathepsin B-like cysteine proteinase 2 (342 aa).

The signal sequence occupies residues 1 to 18; the sequence is MKYLVLALCTYLCSQSGA. Positions 19-86 are cleaved as a propeptide — activation peptide; sequence DENAAQGIPL…VKEDPDPEVD (68 aa). An N-linked (GlcNAc...) asparagine glycan is attached at Asn99. Intrachain disulfides connect Cys100–Cys128, Cys111–Cys156, Cys147–Cys214, Cys148–Cys152, Cys185–Cys218, and Cys193–Cys205. Residue Cys114 is part of the active site. N-linked (GlcNAc...) asparagine glycosylation occurs at Asn138. N-linked (GlcNAc...) asparagine glycosylation is present at Asn198. Residue His285 is part of the active site. Asn296 carries an N-linked (GlcNAc...) asparagine glycan. Asn305 is an active-site residue.

Belongs to the peptidase C1 family.

Expression of the protease correlates with blood-feeding and suggests a role for the protease in blood digestion. In Haemonchus contortus (Barber pole worm), this protein is Cathepsin B-like cysteine proteinase 2 (AC-2).